A 357-amino-acid polypeptide reads, in one-letter code: Quinolinate synthase (357 aa).

Iminosuccinate is bound by residues His50 and Ser71. Cys116 is a [4Fe-4S] cluster binding site. Iminosuccinate-binding positions include 142-144 (YAN) and Ser159. Cys203 provides a ligand contact to [4Fe-4S] cluster. Iminosuccinate is bound by residues 229-231 (HPE) and Thr246. [4Fe-4S] cluster is bound at residue Cys300.

The protein belongs to the quinolinate synthase family. Type 1 subfamily. The cofactor is [4Fe-4S] cluster.

The protein localises to the cytoplasm. The enzyme catalyses iminosuccinate + dihydroxyacetone phosphate = quinolinate + phosphate + 2 H2O + H(+). Its pathway is cofactor biosynthesis; NAD(+) biosynthesis; quinolinate from iminoaspartate: step 1/1. In terms of biological role, catalyzes the condensation of iminoaspartate with dihydroxyacetone phosphate to form quinolinate. The protein is Quinolinate synthase of Shewanella oneidensis (strain ATCC 700550 / JCM 31522 / CIP 106686 / LMG 19005 / NCIMB 14063 / MR-1).